The chain runs to 715 residues: Protein MTSS 2 (715 aa).

The 249-residue stretch at 1–249 (METAEKECGA…EQVIKDLKGS (249 aa)) folds into the IMD domain. Residues 134–156 (HEIKKKSSDTLKLQKKARKGKGD) are a coiled coil. Composition is skewed to low complexity over residues 253 to 274 (WSYQ…SMCS), 284 to 295 (SSVSSHDSGFVS), and 312 to 330 (TSQK…TCQS). 3 disordered regions span residues 253-405 (WSYQ…EVSP), 420-485 (LEHQ…RNSN), and 527-562 (IRRT…PTVP). Threonine 257 bears the Phosphothreonine mark. A Phosphoserine modification is found at serine 261. Residues 331–341 (VSECSSPTSDW) are compositionally biased toward polar residues. The segment covering 360 to 369 (DRVEHLRDTE) has biased composition (basic and acidic residues). Residue serine 404 is modified to Phosphoserine. A compositionally biased stretch (low complexity) spans 429–442 (SLQYSSGYSTQTTT). Residues 443 to 455 (PSCSEDTIPSQGS) are compositionally biased toward polar residues. Phosphoserine is present on residues serine 542, serine 564, serine 575, serine 587, serine 597, and serine 602. Threonine 606 carries the post-translational modification Phosphothreonine. The segment at 661–690 (FPFPTALSATPSEETPTPPPAATSDPPAED) is disordered. Residues 687 to 704 (PAEDMLVAIRRGVRLRRT) form the WH2 domain.

The protein belongs to the MTSS family. In terms of assembly, interacts (via IMD domain) with RAC1; this interaction may be important to potentiate PDGF-induced RAC1 activation.

The protein resides in the cytoplasm. Its subcellular location is the cell projection. It localises to the ruffle. In terms of biological role, involved in plasma membrane dynamics. Potentiated PDGF-mediated formation of membrane ruffles and lamellipodia in fibroblasts, acting via RAC1 activation. May function in actin bundling. The chain is Protein MTSS 2 (Mtss2) from Mus musculus (Mouse).